The sequence spans 423 residues: Histidine--tRNA ligase (423 aa).

This sequence belongs to the class-II aminoacyl-tRNA synthetase family. As to quaternary structure, homodimer.

The protein localises to the cytoplasm. It catalyses the reaction tRNA(His) + L-histidine + ATP = L-histidyl-tRNA(His) + AMP + diphosphate + H(+). This is Histidine--tRNA ligase from Staphylococcus haemolyticus (strain JCSC1435).